We begin with the raw amino-acid sequence, 465 residues long: Sperm microtubule associated protein 2-like (465 aa).

A compositionally biased stretch (polar residues) spans 1–29 (MENQEFLSSSAPSEVTDGQVSTEISTCSE). The tract at residues 1 to 140 (MENQEFLSSS…REAKETELLP (140 aa)) is disordered. 2 stretches are compositionally biased toward basic and acidic residues: residues 40–70 (LDTH…QDQR) and 114–137 (KARE…KETE). THEG repeat units follow at residues 174–192 (RKCF…PKKQ), 214–233 (GALK…PKEV), 260–279 (PALF…PNGF), 297–316 (SLRI…AKGT), 333–352 (STLS…PRIK), 373–392 (AAMI…SKSV), 409–428 (ATTH…PNKR), and 446–465 (AALK…PLTR).

This chain is Sperm microtubule associated protein 2-like, found in Homo sapiens (Human).